Reading from the N-terminus, the 120-residue chain is uncharacterized protein (120 aa).

It to M.tuberculosis Rv0026 and Rv0739.

This is an uncharacterized protein from Mycobacterium tuberculosis (strain CDC 1551 / Oshkosh).